Consider the following 89-residue polypeptide: Small ribosomal subunit protein uS15 (89 aa).

A compositionally biased stretch (basic and acidic residues) spans 1–11; that stretch reads MSIAAERKAEV. Residues 1 to 25 are disordered; it reads MSIAAERKAEVIKTSANKPGDTGSP.

It belongs to the universal ribosomal protein uS15 family. As to quaternary structure, part of the 30S ribosomal subunit. Forms a bridge to the 50S subunit in the 70S ribosome, contacting the 23S rRNA.

Functionally, one of the primary rRNA binding proteins, it binds directly to 16S rRNA where it helps nucleate assembly of the platform of the 30S subunit by binding and bridging several RNA helices of the 16S rRNA. In terms of biological role, forms an intersubunit bridge (bridge B4) with the 23S rRNA of the 50S subunit in the ribosome. In Nitrobacter winogradskyi (strain ATCC 25391 / DSM 10237 / CIP 104748 / NCIMB 11846 / Nb-255), this protein is Small ribosomal subunit protein uS15.